A 219-amino-acid polypeptide reads, in one-letter code: Uracil-DNA glycosylase (219 aa).

Asp64 (proton acceptor) is an active-site residue.

It belongs to the uracil-DNA glycosylase (UDG) superfamily. UNG family.

Its subcellular location is the cytoplasm. The catalysed reaction is Hydrolyzes single-stranded DNA or mismatched double-stranded DNA and polynucleotides, releasing free uracil.. Excises uracil residues from the DNA which can arise as a result of misincorporation of dUMP residues by DNA polymerase or due to deamination of cytosine. The sequence is that of Uracil-DNA glycosylase from Leuconostoc citreum (strain KM20).